The sequence spans 325 residues: Phage-like element PBSX protein XkdQ (325 aa).

This sequence to B.subtilis YqbQ.

The chain is Phage-like element PBSX protein XkdQ (xkdQ) from Bacillus subtilis (strain 168).